Consider the following 164-residue polypeptide: MRCPKCNYHKSSVVDSRQAEDGNTIRRRRECEQCHTRFTTFERVEELPLLVIKKDGTREQFSRDKILNGVVQSAQKRPVSSTDIENVISRIEQKVRTTYENEVSSTAIGNLVMDELAELDEITYVRFASVYKSFKDVDEIEELLQQITNRVRGKKKRLNNDETN.

A zinc finger lies at 3 to 34 (CPKCNYHKSSVVDSRQAEDGNTIRRRRECEQC). The ATP-cone domain occupies 49–139 (LLVIKKDGTR…VYKSFKDVDE (91 aa)).

The protein belongs to the NrdR family. It depends on Zn(2+) as a cofactor.

Its function is as follows. Negatively regulates transcription of bacterial ribonucleotide reductase nrd genes and operons by binding to NrdR-boxes. The protein is Transcriptional repressor NrdR of Streptococcus pyogenes serotype M6 (strain ATCC BAA-946 / MGAS10394).